Here is a 467-residue protein sequence, read N- to C-terminus: Iroquois-class homeodomain protein irx-1-A (467 aa).

Residues 126 to 188 constitute a DNA-binding region (homeobox; TALE-type); the sequence is DPGRPKNATR…NARRRLKKEN (63 aa). Disordered regions lie at residues 197–306, 318–344, and 410–467; these read KEDD…PPHS, TSPD…QHPA, and SLSS…LPSA. Acidic residues-rich tracts occupy residues 215-225 and 233-244; these read EDDEEIDLESI and NDGEQSNEEEDE. Residues 245-262 show a composition bias toward basic and acidic residues; the sequence is KLEHLRQGEKESLKKESE. Residues 415–431 show a composition bias toward basic and acidic residues; the sequence is KTPERTSPKHSDRENVP. Residues 447–460 show a composition bias toward polar residues; that stretch reads RENTLSQQEGTSRI.

The protein belongs to the TALE/IRO homeobox family. In terms of tissue distribution, expressed early in neural differentiation in the neural plate, and expression continues in the neural tube after neural fold closure. Expressed in the presumptive midbrain territory. Also expressed in the prospective neural crest and the preplacodal field, anterior to the neural plate. Strongly expressed in the profundal placode and weakly expressed in the trigeminal placode. Also expressed in the mesoderm in the Spemann organizer from the start of gastrulation, and subsequently in its derivatives; namely in the notochord as well as in the somites of stage 25 embryos, and the somites and notochord of tailbud embryos. Also expressed in specific and overlapping dynamic patterns with irx2 and irx3 during pronephric kidney development. Renal expression begins in the dorsal region of the pronephric anlage at mid neurula stage and continues to at least tailbud stages where expression is confined to the intermediate tubule segment IT1. Renal expression is maintained at tadpole stages.

The protein localises to the nucleus. Functionally, acts partially redundantly with other irx members in neural patterning. Required for formation of the posterior forebrain, midbrain, hindbrain, and to a lesser extent, spinal cord. Acts early in neural plate development to induce expression of some but not all proneural genes, and specify a neural precursor state. Also up-regulates repressors that prevent neuronal differentiation. Patterns the neuroectoderm in both the anterior/posterior and dorsal/ventral axes. Acts primarily as a transcriptional repressor during neural development, and binds to the bmp4 promoter to repress gene expression and thus mediate down-regulation of bmp4 by wnt signaling. Controls multiple processes through bmp4-repression including neural plate development, neural crest specification and Spemann organizer development. Involved in the specification of the preplacodal field at the anterior border of the neural plate. Regulates the genetic cascade of interactions that are necessary for positioning the isthmus organizer and the formation of the midbrain-hindbrain boundary. Required during at least two stages of pronephros kidney development; during neurula stages, maintains transcription of key renal genes to define the size and identity of the pronephric anlage, probably in part through regulation of bmp-signaling. Subsequently required for proper formation of the intermediate tubule segment of the pronephros. Acts principally as a transcriptional activator during pronephros development. This is Iroquois-class homeodomain protein irx-1-A (irx1-a) from Xenopus laevis (African clawed frog).